Here is a 1829-residue protein sequence, read N- to C-terminus: DNA polymerase (1829 aa).

2 DOD-type homing endonuclease domains span residues 527–668 and 1136–1269; these read LSGI…SLGI and FLGY…SLGV.

Belongs to the DNA polymerase type-B family. In terms of processing, this protein undergoes a protein self splicing that involves a post-translational excision of the three intervening regions (inteins) followed by peptide ligation.

The enzyme catalyses DNA(n) + a 2'-deoxyribonucleoside 5'-triphosphate = DNA(n+1) + diphosphate. The protein is DNA polymerase (pol) of Thermococcus aggregans.